Here is a 408-residue protein sequence, read N- to C-terminus: Imidazolonepropionase (408 aa).

2 residues coordinate Fe(3+): histidine 73 and histidine 75. Zn(2+)-binding residues include histidine 73 and histidine 75. Arginine 82, tyrosine 145, and histidine 178 together coordinate 4-imidazolone-5-propanoate. Tyrosine 145 serves as a coordination point for N-formimidoyl-L-glutamate. Histidine 243 contributes to the Fe(3+) binding site. Zn(2+) is bound at residue histidine 243. 4-imidazolone-5-propanoate is bound at residue glutamine 246. A Fe(3+)-binding site is contributed by aspartate 318. Aspartate 318 provides a ligand contact to Zn(2+). The N-formimidoyl-L-glutamate site is built by asparagine 320 and glycine 322. Serine 323 contacts 4-imidazolone-5-propanoate.

Belongs to the metallo-dependent hydrolases superfamily. HutI family. It depends on Zn(2+) as a cofactor. Requires Fe(3+) as cofactor.

The protein localises to the cytoplasm. The enzyme catalyses 4-imidazolone-5-propanoate + H2O = N-formimidoyl-L-glutamate. It participates in amino-acid degradation; L-histidine degradation into L-glutamate; N-formimidoyl-L-glutamate from L-histidine: step 3/3. Catalyzes the hydrolytic cleavage of the carbon-nitrogen bond in imidazolone-5-propanoate to yield N-formimidoyl-L-glutamate. It is the third step in the universal histidine degradation pathway. In Shewanella sp. (strain ANA-3), this protein is Imidazolonepropionase.